Reading from the N-terminus, the 295-residue chain is Bifunctional protein FolD (295 aa).

Residues 166–168 (GRS), threonine 195, and valine 236 contribute to the NADP(+) site.

This sequence belongs to the tetrahydrofolate dehydrogenase/cyclohydrolase family. Homodimer.

The catalysed reaction is (6R)-5,10-methylene-5,6,7,8-tetrahydrofolate + NADP(+) = (6R)-5,10-methenyltetrahydrofolate + NADPH. It carries out the reaction (6R)-5,10-methenyltetrahydrofolate + H2O = (6R)-10-formyltetrahydrofolate + H(+). Its pathway is one-carbon metabolism; tetrahydrofolate interconversion. Its function is as follows. Catalyzes the oxidation of 5,10-methylenetetrahydrofolate to 5,10-methenyltetrahydrofolate and then the hydrolysis of 5,10-methenyltetrahydrofolate to 10-formyltetrahydrofolate. This is Bifunctional protein FolD from Syntrophobacter fumaroxidans (strain DSM 10017 / MPOB).